We begin with the raw amino-acid sequence, 569 residues long: Urease subunit alpha (569 aa).

The region spanning 131-569 is the Urease domain; sequence GAIDSHIHFI…LPLAQRYLLL (439 aa). His-136, His-138, and Lys-219 together coordinate Ni(2+). An N6-carboxylysine modification is found at Lys-219. Residue His-221 participates in substrate binding. Ni(2+) contacts are provided by His-248 and His-274. His-322 functions as the Proton donor in the catalytic mechanism. Asp-362 provides a ligand contact to Ni(2+).

The protein belongs to the metallo-dependent hydrolases superfamily. Urease alpha subunit family. Heterotrimer of UreA (gamma), UreB (beta) and UreC (alpha) subunits. Three heterotrimers associate to form the active enzyme. The cofactor is Ni cation. Carboxylation allows a single lysine to coordinate two nickel ions.

The protein resides in the cytoplasm. The enzyme catalyses urea + 2 H2O + H(+) = hydrogencarbonate + 2 NH4(+). It functions in the pathway nitrogen metabolism; urea degradation; CO(2) and NH(3) from urea (urease route): step 1/1. The chain is Urease subunit alpha from Prochlorococcus marinus (strain NATL2A).